A 254-amino-acid chain; its full sequence is PF03932 family protein CutC (254 aa).

This sequence belongs to the CutC family.

Its subcellular location is the cytoplasm. This is PF03932 family protein CutC from Yersinia pseudotuberculosis serotype O:1b (strain IP 31758).